The primary structure comprises 185 residues: Photosystem I assembly protein Ycf4 (185 aa).

2 helical membrane-spanning segments follow: residues 24 to 44 (YIIGGMLTIGGIGFLLASISS) and 66 to 86 (IIMGAYGVIANLLNFYLWYLV).

The protein belongs to the Ycf4 family.

Its subcellular location is the cellular thylakoid membrane. Its function is as follows. Seems to be required for the assembly of the photosystem I complex. This Prochlorococcus marinus (strain MIT 9301) protein is Photosystem I assembly protein Ycf4.